We begin with the raw amino-acid sequence, 318 residues long: Dihydroorotate dehydrogenase B (NAD(+)), catalytic subunit (318 aa).

FMN-binding positions include Ser19 and 43 to 44; that span reads KT. Residues Lys43, 69–73, and Asn125 each bind substrate; that span reads NAMGL. An FMN-binding site is contributed by Asn125. The Nucleophile role is filled by Cys128. FMN is bound by residues Lys164 and Val192. 193-194 contacts substrate; sequence NT. FMN is bound by residues Gly219, 247–248, and 269–270; these read GG and AT.

This sequence belongs to the dihydroorotate dehydrogenase family. Type 1 subfamily. In terms of assembly, heterotetramer of 2 PyrK and 2 PyrD type B subunits. The cofactor is FMN.

The protein localises to the cytoplasm. It carries out the reaction (S)-dihydroorotate + NAD(+) = orotate + NADH + H(+). It functions in the pathway pyrimidine metabolism; UMP biosynthesis via de novo pathway; orotate from (S)-dihydroorotate (NAD(+) route): step 1/1. Its function is as follows. Catalyzes the conversion of dihydroorotate to orotate with NAD(+) as electron acceptor. This chain is Dihydroorotate dehydrogenase B (NAD(+)), catalytic subunit (pyrD), found in Methanopyrus kandleri (strain AV19 / DSM 6324 / JCM 9639 / NBRC 100938).